Consider the following 617-residue polypeptide: MDPTSKRPPPAASSSTTYPPLPKLEILNPSALPSHRFLRPAKRINEGPDVSHFLTSKAYRDIGVWILQLNHALVPRIIKKSTTVSTSEPTTDGQQQQQQQQQRQQKAEEVDEQQQPPPPPPTDALAAKLQLLRKKRDEQQPTTTEEIKTFPLPRYRDGEGVENQEESESIKKLQRLLKKVEAIIDEAPPDPGPRRFGNVSFRTWFKLLEERADGLLREYLPGGVLRWEQGAGGEKKEEEEGTETETETETEGDSDKKTNEQKQEVVGPLEELKAYFLGGFGSAQRLDYGTGHELSFIMFLGGLWKLGGFEGEENDEDGEVERRIVLGVVEPYLRVIRRLILTYTLEPAGSHGVWGLDDHSFVPYIFGSAQYTRPISSPNEPTPLEGSVPNAPKPSDITKPTAVERYRTENMYFSAIGFIYDVKKGPFWEHSPILFDVSGIKDGWGKINKGMIKMYNAEVLSKFPVVQHFPFGSLFQWEKDPEAGVPVQSVHMQNQPVASAAVTGGVGIPTERPSGPGGVTGTAAPWAQAPAQAPAAGIGAGAGMAPPMTAAPWARSTGAGAGAGVGASAANRFTPFKPAGGPGGAPHTGPPPPESFPSGTPGTASNQFAVTKAPWTK.

A compositionally biased stretch (pro residues) spans 1–11 (MDPTSKRPPPA). 5 disordered regions span residues 1 to 25 (MDPT…PKLE), 84 to 169 (VSTS…ESES), 230 to 261 (GAGG…TNEQ), 376 to 398 (SSPN…SDIT), and 572 to 617 (RFTP…PWTK). The segment covering 84-93 (VSTSEPTTDG) has biased composition (polar residues). Residues 94 to 104 (QQQQQQQQQRQ) show a composition bias toward low complexity. Acidic residues predominate over residues 239–252 (EEGTETETETETEG).

This sequence belongs to the PTPA-type PPIase family.

The protein resides in the cytoplasm. The protein localises to the nucleus. The enzyme catalyses [protein]-peptidylproline (omega=180) = [protein]-peptidylproline (omega=0). PPIases accelerate the folding of proteins. It catalyzes the cis-trans isomerization of proline imidic peptide bonds in oligopeptides. Acts as a regulatory subunit for PP2A-like phosphatases modulating their activity or substrate specificity, probably by inducing a conformational change in the catalytic subunit, a direct target of the PPIase. Can reactivate inactive phosphatase PP2A-phosphatase methylesterase complexes (PP2Ai) in presence of ATP and Mg(2+) by dissociating the inactive form from the complex. In Neurospora crassa (strain ATCC 24698 / 74-OR23-1A / CBS 708.71 / DSM 1257 / FGSC 987), this protein is Serine/threonine-protein phosphatase 2A activator 1 (rrd-1).